We begin with the raw amino-acid sequence, 472 residues long: MVIANSIKTSIPNYVIKDISLSDFGRKEIKIAETEMPGLMALRDKHHSDKPLNGAKIAGSLHMTIQTAVLIETLVDLGAQVKWASCNIFSTQDHAAAAIAEQGISVYAKKGESLDEYWQYTHYILDWGTDSPNMILDDGGDATGLLILGSKAEKDLSVLKNPSNEEEIALFNSIRSKLQEDSSFYSRIKGNIIGVTEETTTGVARLYQLQKQNALPFPAINVNDSVTKSKFDNLYGCRESLVDSIKRATDVMIAGKVALVMGFGDVGKGSAQSLRGLGAIVKVAEVDPICALQAAMEGFSVVTLNDVVEDIDIFVTATGNYQVITNDNLIKMKDEAIVCNIGHFDNEIDVASLKDYPWENIKPQVDHITLPSGNKIILLAEGRLVNLGCATGHPSFVMSNSFTNQVLAQIELFNKSDEYSKEVYVLPKHLDEMVARLHLDKIGAKLTKLTKDQADYINVSVEGPYKPEQYRY.

Substrate is bound by residues T64, D138, and E198. Position 199–201 (199–201) interacts with NAD(+); the sequence is TTT. Residues K228 and D232 each contribute to the substrate site. NAD(+) is bound by residues N233, 262 to 267, E285, N320, 341 to 343, and N386; these read GFGDVG and IGH.

Belongs to the adenosylhomocysteinase family. It depends on NAD(+) as a cofactor.

It localises to the cytoplasm. The catalysed reaction is S-adenosyl-L-homocysteine + H2O = L-homocysteine + adenosine. The protein operates within amino-acid biosynthesis; L-homocysteine biosynthesis; L-homocysteine from S-adenosyl-L-homocysteine: step 1/1. Functionally, may play a key role in the regulation of the intracellular concentration of adenosylhomocysteine. This Prochlorococcus marinus subsp. pastoris (strain CCMP1986 / NIES-2087 / MED4) protein is Adenosylhomocysteinase.